The primary structure comprises 648 residues: Transcriptional regulator ManR (648 aa).

PRD domains lie at lysine 187–glutamine 292 and leucine 297–serine 404. Phosphohistidine; by HPr occurs at positions 222, 281, 334, and 393. Positions lysine 409–arginine 500 constitute a PTS EIIB type-2 domain. The residue at position 415 (cysteine 415) is a Phosphocysteine; by EIIA. Residues asparagine 510–tyrosine 648 form the PTS EIIA type-2 domain. Position 570 is a phosphohistidine; by EIIB (histidine 570).

This sequence belongs to the transcriptional antiterminator BglG family.

The enzyme catalyses D-mannose(out) + N(pros)-phospho-L-histidyl-[protein] = D-mannose 6-phosphate(in) + L-histidyl-[protein]. With respect to regulation, the regulatory activity of ManR is modulated by phosphorylation and dephosphorylation of the various ManR domains. It becomes activated via phosphoryl group transfer from PEP, EI and HPr on the two conserved histidine residues in the PRD 2 domain, whereas phosphorylation of the EIIA-like domain on His-570 by the PTS EIIB-Man domain of ManP inactivates ManR. Its function is as follows. Positively regulates the expression of the mannose operon that consists of three genes, manP, manA, and yjdF, which are responsible for the transport and utilization of mannose. Also activates its own expression. This chain is Transcriptional regulator ManR (manR), found in Bacillus subtilis (strain 168).